Here is a 440-residue protein sequence, read N- to C-terminus: MFLAQEIIRKKRDGHTLSDEEIRFFINGIRDNTISEGQIAALAMTIFFHDMTMPERVSLTMAMRDSGTVLDWKNLNLNGPIVDKHSTGGVGDVTSLMLGPMVAACGGYVPMISGRGLGHTGGTLDKLEAIPGFDIFPDDNRFRDIIQDVGVAIIGQTNSLAPADKRFYATRDITATVDSIPLITGSILAKKLAEGLDALVMDVKVGSGAFMPTYELSEALAEAIVGVANGAGVRTTALLTDMNQVLASSAGNALEVREAVQFLTGEYRNPRLFDVTMALCIEMLISGQLAKDDAQARAKLQAVLDNGKAAEVFGRMVAAQKGPTDFVENYDKYLPAAMLSKAVYADTEGFVSAMDTRALGMAVVSMGGGRRQASDTIDYSVGFTDMVRLGDSVDGQRPLAVIHAKDEANWQEAAKAVKAAIILDDKAPASTPSIYRRITE.

Belongs to the thymidine/pyrimidine-nucleoside phosphorylase family. In terms of assembly, homodimer.

The enzyme catalyses thymidine + phosphate = 2-deoxy-alpha-D-ribose 1-phosphate + thymine. It functions in the pathway pyrimidine metabolism; dTMP biosynthesis via salvage pathway; dTMP from thymine: step 1/2. The enzymes which catalyze the reversible phosphorolysis of pyrimidine nucleosides are involved in the degradation of these compounds and in their utilization as carbon and energy sources, or in the rescue of pyrimidine bases for nucleotide synthesis. This Salmonella arizonae (strain ATCC BAA-731 / CDC346-86 / RSK2980) protein is Thymidine phosphorylase.